We begin with the raw amino-acid sequence, 297 residues long: MIIHPNFDPVAIHLGPLAVRWYGLMYLVGFIAAIVVGRIRLKLPHVAAQGWTAKDIDDMLFYGVLGTVLGGRLGYVLFYKAGFYLSHPLDVFKVWEGGMSFHGGFLGVTLAMVLFAWQRKRHWLQVTDFVAPMVPTGLAAGRLGNFINGELWGRVTDPGAPWAMLFPGAMRDDAAWLPKHPELVEKWHLADVFMQYQMLPRHPSQLYEIALEGVALFFVLFFFARKPRPMGAVSALFLIGYGLARFTVEFAREPDDFLGLLALGLSMGQWLSLPMIVAGIALMVWAYRRRRTAAAAA.

A run of 3 helical transmembrane segments spans residues 17–37 (LAVR…IVVG), 59–79 (MLFY…VLFY), and 97–117 (GGMS…LFAW). R142 serves as a coordination point for a 1,2-diacyl-sn-glycero-3-phospho-(1'-sn-glycerol). 2 consecutive transmembrane segments (helical) span residues 230 to 250 (MGAV…TVEF) and 257 to 277 (FLGL…PMIV).

This sequence belongs to the Lgt family.

It is found in the cell inner membrane. It catalyses the reaction L-cysteinyl-[prolipoprotein] + a 1,2-diacyl-sn-glycero-3-phospho-(1'-sn-glycerol) = an S-1,2-diacyl-sn-glyceryl-L-cysteinyl-[prolipoprotein] + sn-glycerol 1-phosphate + H(+). It participates in protein modification; lipoprotein biosynthesis (diacylglyceryl transfer). In terms of biological role, catalyzes the transfer of the diacylglyceryl group from phosphatidylglycerol to the sulfhydryl group of the N-terminal cysteine of a prolipoprotein, the first step in the formation of mature lipoproteins. The polypeptide is Phosphatidylglycerol--prolipoprotein diacylglyceryl transferase (Burkholderia multivorans (strain ATCC 17616 / 249)).